The following is a 129-amino-acid chain: Histone H2B.1 (129 aa).

Residues 1–19 (MAPKAEKKPASKAPAEKKP) are compositionally biased toward basic and acidic residues. The disordered stretch occupies residues 1 to 37 (MAPKAEKKPASKAPAEKKPAAKKTASTDSKKRTKTRK). Residues K7 and K8 each carry the N6-acetyllysine; alternate modification. Residues K7 and K8 each participate in a glycyl lysine isopeptide (Lys-Gly) (interchain with G-Cter in SUMO); alternate cross-link. S11 carries the phosphoserine modification. K12 carries the N6-acetyllysine modification. K17 carries the post-translational modification N6-acetyllysine; alternate. K17 participates in a covalent cross-link: Glycyl lysine isopeptide (Lys-Gly) (interchain with G-Cter in SUMO); alternate. K18 is covalently cross-linked (Glycyl lysine isopeptide (Lys-Gly) (interchain with G-Cter in SUMO)). Residue K123 forms a Glycyl lysine isopeptide (Lys-Gly) (interchain with G-Cter in ubiquitin) linkage.

Belongs to the histone H2B family. The nucleosome is a histone octamer containing two molecules each of H2A, H2B, H3 and H4 assembled in one H3-H4 heterotetramer and two H2A-H2B heterodimers. The octamer wraps approximately 147 bp of DNA. Post-translationally, monoubiquitinated by the UBC2-BRE1 complex to form H2BK123ub1. H2BK123ub1 gives a specific tag for epigenetic transcriptional activation and is also prerequisite for H3K4me and H3K79me formation. H2BK123ub1 also modulates the formation of double-strand breaks during meiosis and is a prerequisite for DNA-damage checkpoint activation. In terms of processing, phosphorylated by STE20 to form H2BS10ph during progression through meiotic prophase. May be correlated with chromosome condensation. Acetylated by GCN5 to form H2BK11ac and H2BK16ac. H2BK16ac can also be formed by ESA1. Acetylation of N-terminal lysines and particularly formation of H2BK11acK16ac has a positive effect on transcription. Post-translationally, sumoylation to form H2BK6su or H2BK7su, and probably also H2BK16su or H2BK17su, occurs preferentially near the telomeres and represses gene transcription.

The protein resides in the nucleus. It is found in the chromosome. Core component of nucleosome. Nucleosomes wrap and compact DNA into chromatin, limiting DNA accessibility to the cellular machineries which require DNA as a template. Histones thereby play a central role in transcription regulation, DNA repair, DNA replication and chromosomal stability. DNA accessibility is regulated via a complex set of post-translational modifications of histones, also called histone code, and nucleosome remodeling. This is Histone H2B.1 (HTB1) from Meyerozyma guilliermondii (strain ATCC 6260 / CBS 566 / DSM 6381 / JCM 1539 / NBRC 10279 / NRRL Y-324) (Yeast).